A 451-amino-acid polypeptide reads, in one-letter code: Scaffold protein ILK (451 aa).

Residue Met-1 is modified to N-acetylmethionine. ANK repeat units follow at residues 2–30 (DDIFTQCREGNAVAVRLWLDNTENDLNQG), 31–63 (DDHGFSPLHWACREGRSAVVEMLIMRGARINVM), 64–96 (NRGDDTPLHLAASHGHRDIVQKLLQYKADINAV), 97–129 (NEHGNVPLHYACFWGQDQVAEDLVANGALVSIC), and 130–174 (NKYG…GTTR). An interaction with LIMS1 region spans residues 33–139 (HGFSPLHWAC…NKYGEMPMDK (107 aa)). Thr-173 is modified (phosphothreonine). Residues 180–212 (GTLNKHSGIDFKQLNFLAKLNENHSGELWKGRW) are PH-like; mediates interaction with TGFB1I1. Phosphoserine is present on Ser-186. In terms of domain architecture, Protein kinase spans 193-445 (LNFLAKLNEN…PKFDMIVPIL (253 aa)). The ATP site is built by Asn-200, Asn-202, His-203, and Ser-204. The residue at position 246 (Ser-246) is a Phosphoserine. 3 residues coordinate ATP: His-270, Met-272, and Asn-279. A Mg(2+)-binding site is contributed by Asp-339. Lys-341 is an ATP binding site. A Nuclear localization signal motif is present at residues 363 to 371 (KKPEDTNRR). Lys-425 is subject to N6-acetyllysine.

It belongs to the protein kinase superfamily. TKL Ser/Thr protein kinase family. Component of the heterotrimeric IPP (ILK-PINCH-PARVIN) complex composed of ILK, LIMS1/PINCH and PARVA; the complex binds to F-actin via the C-terminal tail of LIMS1 and the N-terminal region of PARVA, promoting F-actin filament bundling. Formation of the IPP complex is dependent on protein kinase C and precedes integrin-mediated cell adhesion and spreading. ILK also interacts with LIMS2/PINCH2 and with PARVB and PARVG which may substitute for LIMS1 and PARVA in the IPP complex; PARVA and PARVB compete for the same binding site. Interaction with PARVG promotes the establishment of cell polarity required for leukocyte migration. Interacts with the cytoplasmic domain of integrin ITGB1 and may also interact with integrins ITGB2, ITGB3 and/or ITGB5. Interacts probably also with TGFB1I1. Interacts (via ANK repeats) with EPHA1 (via SAM domain); stimulated by EFNA1 but independent of the kinase activity of EPHA1. Interacts with FERMT2. Interacts with LIMD2; leading to activate the protein kinase activity. Interacts with PXN/PAXILLIN (via LD motif 4). Interacts with CCDC25 (via cytoplasmic region); initiating the ILK-PARVB cascade to induce cytoskeleton rearrangement and directional migration of cells. Interacts with IQGAP1; the interaction is required for localization of IQGAP1 to the cell cortex. Phosphorylation by PAK1 modulates ILK subcellular location by promoting its nuclear export.

The protein resides in the cell junction. The protein localises to the focal adhesion. It localises to the cell membrane. Its subcellular location is the cell projection. It is found in the lamellipodium. The protein resides in the cytoplasm. The protein localises to the myofibril. It localises to the sarcomere. Its subcellular location is the nucleus. It is found in the cytoskeleton. The protein resides in the microtubule organizing center. The protein localises to the centrosome. It localises to the cell cortex. In terms of biological role, scaffold protein which mediates protein-protein interactions during a range of cellular events including focal adhesion assembly, cell adhesion and cell migration. Regulates integrin-mediated signal transduction by contributing to inside-out integrin activation. Recruits PARVA and LIMS1/PITCH to form the heterotrimeric IPP (ILK-PINCH-PARVIN) complex which binds to F-actin via the C-terminal tail of LIMS1 and the N-terminal region of PARVA, promoting F-actin filament bundling, a process required to generate force for actin cytoskeleton reorganization and subsequent dynamic cell adhesion events such as cell spreading and migration. Binding to PARVA promotes effective assembly of ILK into focal adhesions while PARVA-bound ILK can simultaneously engage integrin-beta cytoplasmic tails to mediate cell adhesion. Plays a role with PARVG in promoting the cell adhesion and spreading of leukocytes. Acts as an upstream effector of both AKT1/PKB and GSK3. Mediates trafficking of caveolae to the cell surface in an ITGB1-dependent manner by promoting the recruitment of IQGAP1 to the cell cortex which cooperates with its effector DIAPH1 to locally stabilize microtubules and allow stable insertion of caveolae into the plasma membrane. Required for the maintenance of mitotic spindle integrity by promoting phosphorylation of TACC3 by AURKA. Associates with chromatin and may act as a negative regulator of transcription when located in the nucleus. The sequence is that of Scaffold protein ILK from Cavia porcellus (Guinea pig).